The sequence spans 106 residues: Transcription initiation factor IIA subunit 2 (106 aa).

Belongs to the TFIIA subunit 2 family. TFIIA is a heterodimer of the large unprocessed subunit 1 and a small subunit gamma. It was originally believed to be a heterotrimer of an alpha, a beta and a gamma subunit.

The protein localises to the nucleus. Functionally, TFIIA is a component of the transcription machinery of RNA polymerase II and plays an important role in transcriptional activation. TFIIA in a complex with TBP mediates transcriptional activity. In Arabidopsis thaliana (Mouse-ear cress), this protein is Transcription initiation factor IIA subunit 2 (TFIIA-S).